The sequence spans 714 residues: Elongation factor G-like protein (714 aa).

One can recognise a tr-type G domain in the interval 21–289 (GGVRNVVLVG…VATRGFPSPM (269 aa)). The interval 30 to 37 (GPSGGGKT) is G1. 30–37 (GPSGGGKT) is a GTP binding site. The segment at 73–77 (QRSVG) is G2. Residues 94 to 97 (DTPG) are G3. GTP contacts are provided by residues 94–98 (DTPGY) and 148–151 (TKLD). Residues 148–151 (TKLD) are G4. Residues 267–269 (CSS) form a G5 region.

The protein belongs to the TRAFAC class translation factor GTPase superfamily. Classic translation factor GTPase family. EF-G/EF-2 subfamily.

The polypeptide is Elongation factor G-like protein (Mycobacterium tuberculosis (strain CDC 1551 / Oshkosh)).